Here is a 341-residue protein sequence, read N- to C-terminus: METTQYGHLLIDGFGVSLRKRRGRILILSKGEKKEIPMKSVKEVVIIGKAALSSELLKALAQSGTDLLIATPTGRPVARLIPAKAGGTARNRYEQYKSLEDRRGIEIARAVIVGKIRNQASNLSYYSKARRMDEELSSELYDAAQQLKREMEELKNEEFPDIDEARKRIMARESKCANIYWEKIASIMEEWKFRGREKRTDLEGNVIDPVNLCLNVCYNLLSAQIWKNVLRFGLDPFLGYLHVERPGRISLVYDLMEPFRPMVDRFVFSYLRGMSPSLFSSNIVSGTIASLRSRFFSDFMNWRLDYKGRKLGMETIMFLYVRDIVSFLRGGKEPTMPYIPW.

Residues Glu-173, His-242, and Glu-257 each coordinate Mn(2+).

Belongs to the CRISPR-associated endonuclease Cas1 family. In terms of assembly, homodimer, forms a heterotetramer with a Cas2 homodimer. It depends on Mg(2+) as a cofactor. Requires Mn(2+) as cofactor.

Its function is as follows. CRISPR (clustered regularly interspaced short palindromic repeat), is an adaptive immune system that provides protection against mobile genetic elements (viruses, transposable elements and conjugative plasmids). CRISPR clusters contain spacers, sequences complementary to antecedent mobile elements, and target invading nucleic acids. CRISPR clusters are transcribed and processed into CRISPR RNA (crRNA). Acts as a dsDNA endonuclease. Involved in the integration of spacer DNA into the CRISPR cassette. The polypeptide is CRISPR-associated endonuclease Cas1 (Korarchaeum cryptofilum (strain OPF8)).